The sequence spans 408 residues: Glutathione-independent formaldehyde dehydrogenase (408 aa).

Cys-61 serves as a coordination point for Zn(2+). Positions 62, 63, and 66 each coordinate NAD(+). Zn(2+) contacts are provided by His-82, Cys-112, Cys-115, Cys-118, Cys-126, and Asp-184. NAD(+)-binding residues include Val-212, Asp-232, Arg-237, Val-277, His-284, Pro-311, Leu-313, Gly-348, and Thr-350.

Belongs to the zinc-containing alcohol dehydrogenase family. Zn(2+) is required as a cofactor.

It catalyses the reaction formaldehyde + NAD(+) + H2O = formate + NADH + 2 H(+). Activity is not inhibited by EDTA, which is probably not sufficient to displace the bound metal. Its function is as follows. Dehydrogenase that catalyzes the NAD(+)-dependent oxidation of formaldehyde. Exhibits lower activity with acetaldehyde (about 10-fold lower than for formaldehyde), but cannot use methanol, ethanol, 1-butanol, glyoxal or formic acid. Is involved in formaldehyde detoxification. In Bacillus subtilis (strain 168), this protein is Glutathione-independent formaldehyde dehydrogenase.